Reading from the N-terminus, the 240-residue chain is MVSPDLIRNVVGIVGNVISFGLFLSPVPIFWWIIKNKNVQNFKADPILVVTINGISLVIEAVYLTIFFLFSDKKNKKKMGVVLATEALFMAAVAVGVLLGAHTHQRRSLIVGILCVIFGTIMYSSPLTIMVVKTKSVEYMPLLLSVVSFLNGLCWTLYALIRFDIFITIPNGLGVLFAIMQLILYAIYYRTTPKKQDKNLELPTVAPIAKDTSIVAPVGNDDDVNGSTASHATINITIEP.

Residues 1-12 lie on the Extracellular side of the membrane; sequence MVSPDLIRNVVG. The region spanning 10–48 is the MtN3/slv 1 domain; that stretch reads VVGIVGNVISFGLFLSPVPIFWWIIKNKNVQNFKADPIL. The helical transmembrane segment at 13–33 threads the bilayer; it reads IVGNVISFGLFLSPVPIFWWI. Residues 34–46 are Cytoplasmic-facing; that stretch reads IKNKNVQNFKADP. The chain crosses the membrane as a helical span at residues 47–67; it reads ILVVTINGISLVIEAVYLTIF. Residues 68–78 lie on the Extracellular side of the membrane; that stretch reads FLFSDKKNKKK. Residues 79–99 form a helical membrane-spanning segment; the sequence is MGVVLATEALFMAAVAVGVLL. Residues 100–108 lie on the Cytoplasmic side of the membrane; it reads GAHTHQRRS. Residues 109–129 form a helical membrane-spanning segment; sequence LIVGILCVIFGTIMYSSPLTI. A MtN3/slv 2 domain is found at 110-191; it reads IVGILCVIFG…LILYAIYYRT (82 aa). The Extracellular segment spans residues 130–140; sequence MVVKTKSVEYM. A helical membrane pass occupies residues 141-161; sequence PLLLSVVSFLNGLCWTLYALI. Residues 162 to 164 lie on the Cytoplasmic side of the membrane; that stretch reads RFD. Residues 165 to 185 traverse the membrane as a helical segment; that stretch reads IFITIPNGLGVLFAIMQLILY. The Extracellular segment spans residues 186–240; sequence AIYYRTTPKKQDKNLELPTVAPIAKDTSIVAPVGNDDDVNGSTASHATINITIEP. 2 N-linked (GlcNAc...) asparagine glycosylation sites follow: asparagine 225 and asparagine 235.

It belongs to the SWEET sugar transporter family. In terms of assembly, forms homooligomers and/or heterooligomers.

It localises to the cell membrane. Its function is as follows. Mediates both low-affinity uptake and efflux of sugar across the plasma membrane. The chain is Bidirectional sugar transporter SWEET7c (SWEET7C) from Oryza sativa subsp. indica (Rice).